The chain runs to 73 residues: MKLTCVVIVAVLLLTACQLITADDSRGTQKHRALRSDTKLSMSTRCKSKGAKCSKLMYDCCSGSCSGTVGRCG.

The first 22 residues, 1-22 (MKLTCVVIVAVLLLTACQLITA), serve as a signal peptide directing secretion. Positions 23 to 45 (DDSRGTQKHRALRSDTKLSMSTR) are excised as a propeptide. Intrachain disulfides connect C46-C61, C53-C65, and C60-C72. Position 72 is a cysteine amide (C72).

Belongs to the conotoxin O1 superfamily. As to expression, expressed by the venom duct.

It is found in the secreted. Its function is as follows. Omega-conotoxins act at presynaptic membranes, they bind and block voltage-gated calcium channels. This toxin inhibits neurotransmitter release, it blocks N-type calcium channels, probably a N-type (Cav2.2/CACNA1B) calcium channel variant. The chain is Omega-conotoxin CVID from Conus catus (Cat cone).